Reading from the N-terminus, the 100-residue chain is Large ribosomal subunit protein uL23 (100 aa).

The protein belongs to the universal ribosomal protein uL23 family. Part of the 50S ribosomal subunit. Contacts protein L29, and trigger factor when it is bound to the ribosome.

Its function is as follows. One of the early assembly proteins it binds 23S rRNA. One of the proteins that surrounds the polypeptide exit tunnel on the outside of the ribosome. Forms the main docking site for trigger factor binding to the ribosome. The polypeptide is Large ribosomal subunit protein uL23 (Shewanella piezotolerans (strain WP3 / JCM 13877)).